We begin with the raw amino-acid sequence, 291 residues long: N-acetylmannosamine kinase (291 aa).

ATP is bound by residues 5–12 (AIDIGGTK) and 132–139 (GVGGGVVC). Positions 156, 166, 168, and 173 each coordinate Zn(2+).

This sequence belongs to the ROK (NagC/XylR) family. NanK subfamily. Homodimer.

The enzyme catalyses an N-acyl-D-mannosamine + ATP = an N-acyl-D-mannosamine 6-phosphate + ADP + H(+). It participates in amino-sugar metabolism; N-acetylneuraminate degradation; D-fructose 6-phosphate from N-acetylneuraminate: step 2/5. Functionally, catalyzes the phosphorylation of N-acetylmannosamine (ManNAc) to ManNAc-6-P. The polypeptide is N-acetylmannosamine kinase (Salmonella gallinarum (strain 287/91 / NCTC 13346)).